Reading from the N-terminus, the 173-residue chain is Calmodulin-like protein 11 (173 aa).

The span at 1–26 (MEEIQQQQQQQQQQQQQQQQQQQQQQ) shows a compositional bias: low complexity. Residues 1–27 (MEEIQQQQQQQQQQQQQQQQQQQQQQE) are disordered. EF-hand domains are found at residues 31–66 (EQIMEFKEAFCLFDKDGDGCITADELATVIRSLDQN), 67–102 (PTEQELQDMITEIDSDGNGTIEFSEFLNLMANQLQE), 104–139 (DADEELKEAFKVFDKDQNGYISASELRHVMINLGEK), and 140–173 (LTDEEVDQMIKEADLDGDGQVNYDEFVRMMMING). Residues aspartate 44, aspartate 46, aspartate 48, cysteine 50, glutamate 55, aspartate 80, aspartate 82, asparagine 84, threonine 86, glutamate 91, aspartate 117, aspartate 119, asparagine 121, tyrosine 123, glutamate 128, aspartate 153, aspartate 155, aspartate 157, glutamine 159, and glutamate 164 each contribute to the Ca(2+) site.

Belongs to the calmodulin family.

Its function is as follows. Potential calcium sensor. The protein is Calmodulin-like protein 11 (CML11) of Arabidopsis thaliana (Mouse-ear cress).